A 327-amino-acid chain; its full sequence is Replication factor C small subunit (327 aa).

47-54 (GPPGTGKT) is a binding site for ATP.

This sequence belongs to the activator 1 small subunits family. RfcS subfamily. In terms of assembly, heteromultimer composed of small subunits (RfcS) and large subunits (RfcL).

Functionally, part of the RFC clamp loader complex which loads the PCNA sliding clamp onto DNA. The polypeptide is Replication factor C small subunit (Sulfurisphaera tokodaii (strain DSM 16993 / JCM 10545 / NBRC 100140 / 7) (Sulfolobus tokodaii)).